A 160-amino-acid polypeptide reads, in one-letter code: SsrA-binding protein (160 aa).

This sequence belongs to the SmpB family.

Its subcellular location is the cytoplasm. Required for rescue of stalled ribosomes mediated by trans-translation. Binds to transfer-messenger RNA (tmRNA), required for stable association of tmRNA with ribosomes. tmRNA and SmpB together mimic tRNA shape, replacing the anticodon stem-loop with SmpB. tmRNA is encoded by the ssrA gene; the 2 termini fold to resemble tRNA(Ala) and it encodes a 'tag peptide', a short internal open reading frame. During trans-translation Ala-aminoacylated tmRNA acts like a tRNA, entering the A-site of stalled ribosomes, displacing the stalled mRNA. The ribosome then switches to translate the ORF on the tmRNA; the nascent peptide is terminated with the 'tag peptide' encoded by the tmRNA and targeted for degradation. The ribosome is freed to recommence translation, which seems to be the essential function of trans-translation. The protein is SsrA-binding protein of Yersinia pseudotuberculosis serotype O:1b (strain IP 31758).